A 332-amino-acid chain; its full sequence is Cell growth regulator with RING finger domain protein 1 (332 aa).

The segment at 274–309 (CVVCQNGTVNWVLLPCRHTCLCDGCVKYFQQCPMCR) adopts an RING-type zinc-finger fold.

Ubiquitously expressed with high expression in testis and the cerebellum.

The protein localises to the nucleus. It localises to the endoplasmic reticulum. Able to inhibit growth in several cell lines. This chain is Cell growth regulator with RING finger domain protein 1 (CGRRF1), found in Homo sapiens (Human).